Here is a 352-residue protein sequence, read N- to C-terminus: Isoflavone-7-O-methyltransferase 8 (352 aa).

Position 118 to 127 (118 to 127) interacts with substrate; it reads VLDPTLSGSY. Positions 196, 219, 239, 240, and 253 each coordinate S-adenosyl-L-methionine. Residue His257 is the Proton acceptor of the active site.

This sequence belongs to the class I-like SAM-binding methyltransferase superfamily. Cation-independent O-methyltransferase family. COMT subfamily. Homodimer.

It carries out the reaction a 7-hydroxyisoflavone + S-adenosyl-L-methionine = a 7-methoxyisoflavone + S-adenosyl-L-homocysteine + H(+). It participates in phytoalexin biosynthesis; medicarpin biosynthesis. Transfers a methyl group to 7-hydroxyls of the isoflavones daidzein, genistein and 6,7,4'-trihydroxyisoflavone. Can also methylate (+)6a-hydroxymaackiain with lower efficiency. The protein is Isoflavone-7-O-methyltransferase 8 of Medicago sativa (Alfalfa).